Here is a 524-residue protein sequence, read N- to C-terminus: RNA-splicing ligase RtcB homolog 2 (524 aa).

Residues Asp-141, Cys-144, His-249, His-281, and His-372 each contribute to the Mn(2+) site. 248-252 (NHYLE) lines the GMP pocket. GMP contacts are provided by residues 372–373 (HN), 421–424 (GGSM), Ser-428, 447–450 (HGAG), and Lys-523. His-447 (GMP-histidine intermediate) is an active-site residue.

This sequence belongs to the RtcB family. As to quaternary structure, catalytic component of the tRNA-splicing ligase complex. It depends on Mn(2+) as a cofactor.

It catalyses the reaction a 3'-end 3'-phospho-ribonucleotide-RNA + a 5'-end dephospho-ribonucleoside-RNA + GTP = a ribonucleotidyl-ribonucleotide-RNA + GMP + diphosphate. The enzyme catalyses a 3'-end 2',3'-cyclophospho-ribonucleotide-RNA + a 5'-end dephospho-ribonucleoside-RNA + GTP + H2O = a ribonucleotidyl-ribonucleotide-RNA + GMP + diphosphate + H(+). Its function is as follows. Catalytic subunit of the tRNA-splicing ligase complex that acts by directly joining spliced tRNA halves to mature-sized tRNAs by incorporating the precursor-derived splice junction phosphate into the mature tRNA as a canonical 3',5'-phosphodiester. May act as an RNA ligase with broad substrate specificity, and may function toward other RNAs. The sequence is that of RNA-splicing ligase RtcB homolog 2 from Entamoeba dispar (strain ATCC PRA-260 / SAW760).